Consider the following 762-residue polypeptide: MGMRTVLTGLAGMLLGSMMPVQADMPRPTGLAADIRWTAYGVPHIRAKDERGLGYGIGYAYARDNACLLAEEIVTARGERARYFGSEGKSSAELDNLPSDIFYAWLNQPEALQAFWQAQTPAVRQLLEGYAAGFNRFLREADGKTTSCLGQPWLRAIATDDLLRLTRRLLVEGGVGQFADALVAAAPPGAEKVALSGEQAFQVAEQRRQRFRLERGSNAIAVGSERSADGKGMLLANPHFPWNGAMRFYQMHLTIPGRLDVMGASLPGLPVVNIGFSRHLAWTHTVDTSSHFTLYRLALDPKDPRRYLVDGRSLPLEEKSVAIEVRGADGKLSRVEHKVYQSIYGPLVVWPGKLDWNRSEAYALRDANLENTRVLQQWYSINQASDVADLRRRVEALQGIPWVNTLAADEQGNALYMNQSVVPYLKPELIPACAIPQLVAEGLPALQGQDSRCAWSRDPAAAQAGITPAAQLPVLLRRDFVQNSNDSAWLTNPASPLQGFSPLVSQEKPIGPRARYALSRLQGKQPLEAKTLEEMVTANHVFSADQVLPDLLRLCRDNQGEKSLARACAALAQWDRGANLDSGSGFVYFQRFMQRFAELDGAWKEPFDAQRPLDTPQGIALDRPQVATQVRQALADAAAEVEKSGIPDGARWGDLQVSTRGQERIAIPGGDGHFGVYNAIQSVRKGDHLEVVGGTSYIQLVTFPEEGPKARGLLAFSQSSDPRSPHYRDQTELFSRQQWQTLPFSDRQIDADPQLQRLSIRE.

The N-terminal stretch at methionine 1–alanine 23 is a signal peptide. Residues alanine 194–glycine 216 constitute a propeptide, spacer peptide. Serine 217 functions as the Nucleophile in the catalytic mechanism.

Belongs to the peptidase S45 family. As to quaternary structure, heterodimer of an alpha subunit and a beta subunit processed from the same precursor.

It localises to the periplasm. The catalysed reaction is an N-acyl-L-homoserine lactone + H2O = L-homoserine lactone + a carboxylate. Its function is as follows. Catalyzes the deacylation of acyl-homoserine lactone (AHL or acyl-HSL), releasing homoserine lactone (HSL) and the corresponding fatty acid. Possesses a specificity for the degradation of long-chain acyl-HSLs (side chains of 11 to 14 carbons in length). Degrades 3-oxo-C12-HSL, one of the two main AHL signal molecules of P.aeruginosa, and thereby functions as a quorum quencher, inhibiting the las quorum-sensing system. Therefore, may enable P.aeruginosa to modulate its own quorum-sensing-dependent pathogenic potential. Also appears to be required for pyoverdin biosynthesis. The chain is Acyl-homoserine lactone acylase PvdQ (pvdQ) from Pseudomonas aeruginosa (strain ATCC 15692 / DSM 22644 / CIP 104116 / JCM 14847 / LMG 12228 / 1C / PRS 101 / PAO1).